Reading from the N-terminus, the 354-residue chain is Rhodopsin (354 aa).

Residues 1–36 are Extracellular-facing; that stretch reads MNGTEGPNFYIPMSNKTGVVRSPFDYPQYYLAEPWK. An N-linked (GlcNAc...) (hybrid) asparagine glycan is attached at asparagine 2. Asparagine 15 carries an N-linked (GlcNAc...) asparagine glycan. A helical membrane pass occupies residues 37 to 61; it reads YSVLAAYMFLLILLGLPINFMTLYV. At 62 to 73 the chain is on the cytoplasmic side; that stretch reads TIQHKKLRTPLN. Residues 74 to 96 form a helical membrane-spanning segment; it reads YILLNLGVCNHFMVLCGFTITMY. The Extracellular segment spans residues 97 to 110; that stretch reads TSLHGYFVFGQTGC. Cysteine 110 and cysteine 187 are joined by a disulfide. Residues 111-133 traverse the membrane as a helical segment; sequence YFEGFFATLGGEIALWSLVVLAI. The 'Ionic lock' involved in activated form stabilization signature appears at 134 to 136; that stretch reads ERY. The Cytoplasmic segment spans residues 134 to 152; that stretch reads ERYIVVCKPMSNFRFGENH. Residues 153-173 traverse the membrane as a helical segment; that stretch reads AMMGVAFTWIMALACAVPPLF. Residues 174-202 lie on the Extracellular side of the membrane; it reads GWSRYIPEGMQCSCGVDYYTLKPEVNNES. A helical transmembrane segment spans residues 203–224; sequence FVIYMFVVHFLIPLIIISFCYG. Over 225-252 the chain is Cytoplasmic; it reads RLVCTVKEAAAQQQESATTQKAEKEVTR. A helical transmembrane segment spans residues 253-274; sequence MVIIMVIFFLICWVPYAYVAFY. Residues 275-286 are Extracellular-facing; it reads IFTHQGSEFGPI. The helical transmembrane segment at 287–308 threads the bilayer; sequence FMTVPAFFAKSSAIYNPVIYIM. Position 296 is an N6-(retinylidene)lysine (lysine 296). Over 309-354 the chain is Cytoplasmic; sequence LNKQFRNCMITTLCCGKNPFGDDDASSAATSKTEATSVSTSQVSPA. 2 S-palmitoyl cysteine lipidation sites follow: cysteine 322 and cysteine 323. A disordered region spans residues 332 to 354; that stretch reads DASSAATSKTEATSVSTSQVSPA. Low complexity predominate over residues 334 to 354; the sequence is SSAATSKTEATSVSTSQVSPA.

It belongs to the G-protein coupled receptor 1 family. Opsin subfamily. Post-translationally, contains one covalently linked retinal chromophore. Upon light absorption, the covalently bound 11-cis-retinal is converted to all-trans-retinal. After hydrolysis of the Schiff base and release of the covalently bound all-trans-retinal, active rhodopsin is regenerated by binding of a fresh molecule of 11-cis-retinal. Detected in retina rod photoreceptor cell outer segments (at protein level). Detected in retina.

Its subcellular location is the membrane. The protein localises to the cell projection. It localises to the cilium. It is found in the photoreceptor outer segment. Functionally, photoreceptor required for image-forming vision at low light intensity. Required for photoreceptor cell viability after birth. Light-induced isomerization of 11-cis to all-trans retinal triggers a conformational change that activates signaling via G-proteins. Subsequent receptor phosphorylation mediates displacement of the bound G-protein alpha subunit by arrestin and terminates signaling. This is Rhodopsin (RHO) from Lithobates pipiens (Northern leopard frog).